The primary structure comprises 1055 residues: Error-prone DNA polymerase (1055 aa).

The protein belongs to the DNA polymerase type-C family. DnaE2 subfamily.

It is found in the cytoplasm. The catalysed reaction is DNA(n) + a 2'-deoxyribonucleoside 5'-triphosphate = DNA(n+1) + diphosphate. In terms of biological role, DNA polymerase involved in damage-induced mutagenesis and translesion synthesis (TLS). It is not the major replicative DNA polymerase. This Corynebacterium glutamicum (strain ATCC 13032 / DSM 20300 / JCM 1318 / BCRC 11384 / CCUG 27702 / LMG 3730 / NBRC 12168 / NCIMB 10025 / NRRL B-2784 / 534) protein is Error-prone DNA polymerase.